Consider the following 154-residue polypeptide: Peptide deformylase (154 aa).

The Fe cation site is built by cysteine 90 and histidine 132. The active site involves glutamate 133. A Fe cation-binding site is contributed by histidine 136.

The protein belongs to the polypeptide deformylase family. Requires Fe(2+) as cofactor.

The enzyme catalyses N-terminal N-formyl-L-methionyl-[peptide] + H2O = N-terminal L-methionyl-[peptide] + formate. Functionally, removes the formyl group from the N-terminal Met of newly synthesized proteins. Requires at least a dipeptide for an efficient rate of reaction. N-terminal L-methionine is a prerequisite for activity but the enzyme has broad specificity at other positions. This chain is Peptide deformylase, found in Desulforudis audaxviator (strain MP104C).